We begin with the raw amino-acid sequence, 202 residues long: Pyridoxal 5'-phosphate synthase subunit PdxT (202 aa).

Position 49 to 51 (49 to 51) interacts with L-glutamine; that stretch reads GES. The Nucleophile role is filled by Cys81. Residues Arg110 and 139–140 contribute to the L-glutamine site; that span reads IR. Residues His182 and Glu184 each act as charge relay system in the active site.

Belongs to the glutaminase PdxT/SNO family. As to quaternary structure, in the presence of PdxS, forms a dodecamer of heterodimers. Only shows activity in the heterodimer.

The catalysed reaction is aldehydo-D-ribose 5-phosphate + D-glyceraldehyde 3-phosphate + L-glutamine = pyridoxal 5'-phosphate + L-glutamate + phosphate + 3 H2O + H(+). It catalyses the reaction L-glutamine + H2O = L-glutamate + NH4(+). It participates in cofactor biosynthesis; pyridoxal 5'-phosphate biosynthesis. Functionally, catalyzes the hydrolysis of glutamine to glutamate and ammonia as part of the biosynthesis of pyridoxal 5'-phosphate. The resulting ammonia molecule is channeled to the active site of PdxS. This is Pyridoxal 5'-phosphate synthase subunit PdxT from Rhodococcus jostii (strain RHA1).